Consider the following 296-residue polypeptide: uncharacterized protein (296 aa).

The HTH lysR-type domain maps to 1-60 (MDPKISYFQTFIVASKTKSFSKAAKRLGITQGTVSNHISALEKYFDAQLFLRTPEGVDLT). Positions 20–39 (FSKAAKRLGITQGTVSNHIS) form a DNA-binding region, H-T-H motif.

Belongs to the LysR transcriptional regulatory family.

This is an uncharacterized protein from Methanocaldococcus jannaschii (strain ATCC 43067 / DSM 2661 / JAL-1 / JCM 10045 / NBRC 100440) (Methanococcus jannaschii).